We begin with the raw amino-acid sequence, 792 residues long: MKVPVKWLKDYVDFDINAKELGDRLTLSGSKVEEIITSGDEITNVVTGKILKIDPHPDAEKLVICSVDVGKNEPIQIVTGAQNMKENDIVPVALHGSTLPGGVKIKKGKLRGVVSNGMMCAKEELGIADEEHVHGLMILDENTPIGKDIKEVLGLDNPVIDFEITSNRPDCLSVIGIARETAATINTKYRNVKIDFSETKGRNIKEELEVEVKDKLCRRYMARVIKNVKIEDSPAWMQERLMLAGVRPINNIVDITNFVMLEVGQPMHAFDKKMITSNKIVIERAKDGEKFTTLDSEERSLDSNVLMIKDGDKNCAIAGIMGGLDSEVAENTHEIIFESANFDGTNIRVSSQKLALRTEASGRYEKDLDPNLAEIALNRACTLIQELNAGEIVEGVIDIYPVKSEPNIVEVDYNWINNFLGIKISKEEMKEYLDRLELTTEIKGDKLEVFSPTFRCDINIKEDVAEEVARIYGYNKVPSTTVKSQSIRTGKSKIQQIKDVVTDILISSGLNESINYSFVSPKIFDKILVPEDSELRNVVKIRNPLGEDFSVMRTTTLHSMMESLARNYSHNNELAKLFEIGKVYIPSENEGEIPKERNVITIGMYGNVDYFDLKGVVENLVEILGVNKISYARESENPTFHPGKTAVIKIKNTVLGTLGEVHPDVCENYEVEERCYVAEIDLDLLLENVSLSRKYKALPKFPTVTRDISVLVDEDILVQEIENVIKRQGGTILESLNLFDVYKGKQVPQGKKSVSYALTYRDENKTLTDKDVEKIQNKVIKTLEHVLGAELR.

One can recognise a tRNA-binding domain in the interval Gly39–Lys150. The 76-residue stretch at Ser404 to Ser479 folds into the B5 domain. Asp457, Asp463, Glu466, and Glu467 together coordinate Mg(2+). In terms of domain architecture, FDX-ACB spans Pro699–Arg792.

Belongs to the phenylalanyl-tRNA synthetase beta subunit family. Type 1 subfamily. In terms of assembly, tetramer of two alpha and two beta subunits. Mg(2+) serves as cofactor.

It is found in the cytoplasm. It carries out the reaction tRNA(Phe) + L-phenylalanine + ATP = L-phenylalanyl-tRNA(Phe) + AMP + diphosphate + H(+). This chain is Phenylalanine--tRNA ligase beta subunit, found in Clostridium acetobutylicum (strain ATCC 824 / DSM 792 / JCM 1419 / IAM 19013 / LMG 5710 / NBRC 13948 / NRRL B-527 / VKM B-1787 / 2291 / W).